The chain runs to 236 residues: uncharacterized protein (236 aa).

The signal sequence occupies residues 1 to 29 (MKGGDKMKKLILLMLLLPISLIGCTDEES).

This is an uncharacterized protein from Archaeoglobus fulgidus (strain ATCC 49558 / DSM 4304 / JCM 9628 / NBRC 100126 / VC-16).